The sequence spans 161 residues: Cyclic pyranopterin monophosphate synthase (161 aa).

Substrate-binding positions include 75–77 and 113–114; these read LCH and ME. The active site involves aspartate 128.

Belongs to the MoaC family. As to quaternary structure, homohexamer; trimer of dimers.

The catalysed reaction is (8S)-3',8-cyclo-7,8-dihydroguanosine 5'-triphosphate = cyclic pyranopterin phosphate + diphosphate. Its pathway is cofactor biosynthesis; molybdopterin biosynthesis. In terms of biological role, catalyzes the conversion of (8S)-3',8-cyclo-7,8-dihydroguanosine 5'-triphosphate to cyclic pyranopterin monophosphate (cPMP). The sequence is that of Cyclic pyranopterin monophosphate synthase from Salmonella heidelberg (strain SL476).